Reading from the N-terminus, the 657-residue chain is Transmembrane protein 232 (657 aa).

2 helical membrane-spanning segments follow: residues 168–188 and 353–373; these read IGYLVFLRLFIFFLHGHLESF and WAWNVVYIYTVILAEICLYAA.

The protein localises to the membrane. Functionally, plays a critical role for male fertility and sperm motility by regulating sperm cytoplasm removal and maintaining axoneme integrity. In Homo sapiens (Human), this protein is Transmembrane protein 232 (TMEM232).